A 187-amino-acid polypeptide reads, in one-letter code: GTP cyclohydrolase 1 (187 aa).

Residues Cys74, His77, and Cys145 each contribute to the Zn(2+) site.

It belongs to the GTP cyclohydrolase I family. In terms of assembly, homomer.

The enzyme catalyses GTP + H2O = 7,8-dihydroneopterin 3'-triphosphate + formate + H(+). It functions in the pathway cofactor biosynthesis; 7,8-dihydroneopterin triphosphate biosynthesis; 7,8-dihydroneopterin triphosphate from GTP: step 1/1. The sequence is that of GTP cyclohydrolase 1 from Sulfurihydrogenibium sp. (strain YO3AOP1).